The chain runs to 396 residues: Squamosa promoter-binding-like protein 10 (396 aa).

The interval 74 to 104 is disordered; sequence QSTSINSSSPEDKRCNLASQSSPGDSSSNID. A compositionally biased stretch (polar residues) spans 90–104; the sequence is LASQSSPGDSSSNID. An SBP-type zinc finger spans residues 173 to 250; sequence VPRCQIDGCE…SHHNARRRKP (78 aa). Residues Cys176, Cys181, Cys198, His201, Cys217, Cys220, His224, and Cys236 each contribute to the Zn(2+) site. The short motif at 233-249 is the Bipartite nuclear localization signal element; that stretch reads KRSCRKRLSHHNARRRK.

Zn(2+) is required as a cofactor.

The protein resides in the nucleus. In terms of biological role, trans-acting factor that binds specifically to the consensus nucleotide sequence 5'-TNCGTACAA-3'. The polypeptide is Squamosa promoter-binding-like protein 10 (SPL10) (Arabidopsis thaliana (Mouse-ear cress)).